The sequence spans 328 residues: Carbonic anhydrase-related protein 10 (328 aa).

In terms of domain architecture, Alpha-carbonic anhydrase spans 31 to 301 (GWWAYKEVVQ…LNNRCIRTNI (271 aa)).

The protein belongs to the alpha-carbonic anhydrase family.

Its function is as follows. Does not have a catalytic activity. The protein is Carbonic anhydrase-related protein 10 (CA10) of Bos taurus (Bovine).